A 101-amino-acid polypeptide reads, in one-letter code: Peroxisomal biogenesis factor 39 (101 aa).

Its subcellular location is the peroxisome. Functionally, may be a peroxin involved in the PTS2-mediated protein import pathway. This chain is Peroxisomal biogenesis factor 39, found in Homo sapiens (Human).